The primary structure comprises 427 residues: 3-phosphoshikimate 1-carboxyvinyltransferase (427 aa).

3-phosphoshikimate is bound by residues lysine 22, serine 23, and arginine 27. Residue lysine 22 participates in phosphoenolpyruvate binding. 2 residues coordinate phosphoenolpyruvate: glycine 96 and arginine 124. Residues serine 169, serine 170, glutamine 171, serine 197, aspartate 313, asparagine 336, and lysine 340 each coordinate 3-phosphoshikimate. Glutamine 171 is a binding site for phosphoenolpyruvate. Aspartate 313 (proton acceptor) is an active-site residue. Phosphoenolpyruvate is bound by residues arginine 344, arginine 386, and lysine 411.

This sequence belongs to the EPSP synthase family. Monomer.

It is found in the cytoplasm. It carries out the reaction 3-phosphoshikimate + phosphoenolpyruvate = 5-O-(1-carboxyvinyl)-3-phosphoshikimate + phosphate. It participates in metabolic intermediate biosynthesis; chorismate biosynthesis; chorismate from D-erythrose 4-phosphate and phosphoenolpyruvate: step 6/7. Functionally, catalyzes the transfer of the enolpyruvyl moiety of phosphoenolpyruvate (PEP) to the 5-hydroxyl of shikimate-3-phosphate (S3P) to produce enolpyruvyl shikimate-3-phosphate and inorganic phosphate. In Salmonella typhi, this protein is 3-phosphoshikimate 1-carboxyvinyltransferase.